The sequence spans 448 residues: Velvet complex subunit 2 (448 aa).

Disordered stretches follow at residues 1–153 (MNSA…SKIE) and 224–306 (EPGT…NGYG). Residues 15–34 (PGPAYSSSAPPPIHTYQQHQ) show a composition bias toward low complexity. 2 stretches are compositionally biased toward pro residues: residues 35 to 44 (HPPPPLPPPS) and 52 to 61 (PPLPPPPSAP). Low complexity predominate over residues 96–107 (APYQQSQPSQYP). Residues 116–132 (VPPPSQHDEPPPPPSSG) are compositionally biased toward pro residues. Positions 155-431 (GSGWKYSLDV…ANQGIKIPIR (277 aa)) constitute a Velvet domain. A compositionally biased stretch (low complexity) spans 260–292 (QQSYGPAPSYPPSSSYGPPQQYYPRHSGYSAEP).

Belongs to the velvet family. VelB subfamily. As to quaternary structure, component of the heterotrimeric velvet complex composed of LAE1, VE1 and VELB; VE1 acting as a bridging protein between LAE1 and VEL2. Interacts with VE1. Forms a heterodimeric complex with VOS1; the formation of the VELB-VOS1 complex is light-dependent.

It localises to the nucleus. Its subcellular location is the cytoplasm. Component of the velvet transcription factor complex that controls sexual/asexual developmental ratio in response to light, promoting sexual development in the darkness while stimulating asexual sporulation under illumination. The velvet complex acts as a global regulator for secondary metabolite gene expression. Component of the VELB-VOS1 heterodimeric complex that plays a dual role in activating genes associated with spore maturation and repressing certain development-associated genes. The VELB-VOS1 complex binds DNA through the DNA-binding domain of VOS1 that recognizes an 11-nucleotide consensus sequence 5'-CTGGCCGCGGC-3' consisting of two motifs in the promoters of key developmental regulatory genes. Controls the expression of the fumonisins gene cluster. Involved in cell wall integrity, cell surface hydrophobicity, hyphal polarity and conidiation pattern. Involved in oxidative stress resistance by positively regulating the transcription of the catalase-encoding gene CAT2. This Gibberella moniliformis (strain M3125 / FGSC 7600) (Maize ear and stalk rot fungus) protein is Velvet complex subunit 2.